The chain runs to 708 residues: Leukotoxin translocation ATP-binding protein LktB (708 aa).

The 126-residue stretch at 1 to 126 (MEANHQRNDL…ACYQGQLILV (126 aa)) folds into the Peptidase C39 domain. Positions 155–437 (FLETLIVSIF…LAQLWQDFQQ (283 aa)) constitute an ABC transmembrane type-1 domain. The next 5 helical transmembrane spans lie at 159-179 (LIVS…FQVV), 192-212 (LNII…LSGL), 270-290 (ALTS…MWYY), 296-316 (LVIL…SPIL), and 389-409 (VMVI…LSIG). Residues 469-704 (ISFKNIRFRY…SNGLYSYLHQ (236 aa)) enclose the ABC transporter domain. 503–510 (GRSGSGKS) contacts ATP.

The protein belongs to the ABC transporter superfamily. Protein-1 exporter (TC 3.A.1.109) family. In terms of assembly, homodimer.

The protein localises to the cell inner membrane. It carries out the reaction ATP + H2O + proteinSide 1 = ADP + phosphate + proteinSide 2.. Its function is as follows. Part of the ABC transporter complex LktBD involved in leukotoxin export. Transmembrane domains (TMD) form a pore in the inner membrane and the ATP-binding domain (NBD) is responsible for energy generation. This chain is Leukotoxin translocation ATP-binding protein LktB (lktB), found in Bibersteinia trehalosi (Pasteurella trehalosi).